Reading from the N-terminus, the 244-residue chain is Mediator of RNA polymerase II transcription subunit 9 (244 aa).

Positions 1–10 (MDQFSGGGGN) are enriched in gly residues. Disordered stretches follow at residues 1-28 (MDQF…TPTN) and 96-131 (QQRL…HTPQ). The span at 13-28 (MIPNVQAQGNFGTPTN) shows a compositional bias: polar residues. Composition is skewed to low complexity over residues 96-111 (QQRL…QSLQ) and 122-131 (TPQSMMHTPQ). Residues 212–239 (KRNVEESEQLLQQRRDLIVEYRKSIEEI) adopt a coiled-coil conformation.

This sequence belongs to the plant Mediator complex subunit 9 family. As to quaternary structure, component of the Mediator complex. Interacts with MEE14/CBP1.

It localises to the nucleus. In terms of biological role, component of the Mediator complex, a coactivator involved in the regulated transcription of nearly all RNA polymerase II-dependent genes. Mediator functions as a bridge to convey information from gene-specific regulatory proteins to the basal RNA polymerase II transcription machinery. The Mediator complex, having a compact conformation in its free form, is recruited to promoters by direct interactions with regulatory proteins and serves for the assembly of a functional pre-initiation complex with RNA polymerase II and the general transcription factors. The chain is Mediator of RNA polymerase II transcription subunit 9 (MED9) from Arabidopsis thaliana (Mouse-ear cress).